The chain runs to 458 residues: Transmembrane protein 135 (458 aa).

The next 6 membrane-spanning stretches (helical) occupy residues 68-88, 96-116, 149-169, 298-318, 331-351, and 380-400; these read ILQS…FFCI, FYLW…AILV, TLRN…MFFF, FQLG…SCFL, IIAG…TISM, and IIYS…VQTL.

This sequence belongs to the TMEM135 family.

Its subcellular location is the mitochondrion membrane. It localises to the peroxisome membrane. Its function is as follows. Involved in mitochondrial metabolism by regulating the balance between mitochondrial fusion and fission. May act as a regulator of mitochondrial fission that promotes DNM1L-dependent fission through activation of DNM1L. May be involved in peroxisome organization. This Bos taurus (Bovine) protein is Transmembrane protein 135.